Consider the following 348-residue polypeptide: MDASKSKALEAALSQIDRQFGKGTVMRLGDKGREKMPAISTGSLGLDVALGIGGLPKGRIVEIYGPESSGKTTLTLQVIAEAQRQGGTCAFVDAEHALDPVYAEKLGVNVDDLIISQPDNGEQALEVADMLVRSGAVDVLVVDSVAALTPKAEIEGDMGDHHVGLQARLMSQALRKITGNIKNANCLAIFINQIRMKIGVMFGNPETTTGGNALKFYSSVRLDIRRIGSVKEGDEVVGSDTRVKVVKNKVAPPFKQAEFQILYGQGINRLGEIVDFGVKLGLIDKAGAWYSYNGDKIGQGKANAMQYLRDNKEVAEFLEQKIKAELLGDIKPVAKEGAEVEEESAEQE.

65–72 contributes to the ATP binding site; it reads GPESSGKT.

The protein belongs to the RecA family.

The protein localises to the cytoplasm. Can catalyze the hydrolysis of ATP in the presence of single-stranded DNA, the ATP-dependent uptake of single-stranded DNA by duplex DNA, and the ATP-dependent hybridization of homologous single-stranded DNAs. It interacts with LexA causing its activation and leading to its autocatalytic cleavage. The chain is Protein RecA from Saccharophagus degradans (strain 2-40 / ATCC 43961 / DSM 17024).